Consider the following 138-residue polypeptide: Acidic phospholipase A2 MVL-PLA2 (138 aa).

An N-terminal signal peptide occupies residues 1–16; the sequence is MRTLWIVAVCLMGVEG. 7 disulfide bridges follow: C42-C131, C44-C60, C59-C111, C65-C138, C66-C104, C73-C97, and C91-C102. Y43, G45, and G47 together coordinate Ca(2+). The active site involves H63. D64 contributes to the Ca(2+) binding site. A May inhibit integrin function (Atypical cell attachment site) motif is present at residues 86–88; the sequence is NGD. D105 is a catalytic residue.

This sequence belongs to the phospholipase A2 family. Group II subfamily. D49 sub-subfamily. The cofactor is Ca(2+). Expressed by the venom gland.

Its subcellular location is the secreted. It catalyses the reaction a 1,2-diacyl-sn-glycero-3-phosphocholine + H2O = a 1-acyl-sn-glycero-3-phosphocholine + a fatty acid + H(+). Snake venom phospholipase A2 (PLA2) that displays an inhibitory effect, independent from its catalytic activity, on tumor cell adhesion and migration. This effect is mediated via specific inhibition of integrins alpha-5/beta-1 (ITGA5/ITGB1), alpha-v/beta-3 (ITGAV/ITGB3) and alpha-v/beta-6 (ITGAV/ITGB6). PLA2 catalyzes the calcium-dependent hydrolysis of the 2-acyl groups in 3-sn-phosphoglycerides. The protein is Acidic phospholipase A2 MVL-PLA2 of Macrovipera lebetina transmediterranea (Blunt-nosed viper).